The primary structure comprises 428 residues: D-amino acid dehydrogenase (428 aa).

Position 3–17 (valine 3–tyrosine 17) interacts with FAD.

This sequence belongs to the DadA oxidoreductase family. FAD serves as cofactor.

The catalysed reaction is a D-alpha-amino acid + A + H2O = a 2-oxocarboxylate + AH2 + NH4(+). Its pathway is amino-acid degradation; D-alanine degradation; NH(3) and pyruvate from D-alanine: step 1/1. Oxidative deamination of D-amino acids. This Burkholderia pseudomallei (strain 1106a) protein is D-amino acid dehydrogenase.